Consider the following 291-residue polypeptide: Verruculogen synthase (291 aa).

It belongs to the PhyH family. Homodimer. The cofactor is Fe cation.

The enzyme catalyses fumitremorgin B + 2-oxoglutarate + AH2 + 2 O2 = verruculogen + succinate + A + CO2 + H2O. The protein operates within mycotoxin biosynthesis. Functionally, verruculogen synthase; part of the gene cluster that mediates the biosynthesis of fumitremorgins, indole alkaloids that carry not only intriguing chemical structures, but also interesting biological and pharmacological activities. The biosynthesis of fumitremorgin-type alkaloids begins by condensation of the two amino acids L-tryptophan and L-proline to brevianamide F, catalyzed by the non-ribosomal peptide synthetase ftmPS/ftmA. Brevianamide F is then prenylated by the prenyltransferase ftmPT1/ftmB in the presence of dimethylallyl diphosphate, resulting in the formation of tryprostatin B. The three cytochrome P450 monooxygenases, ftmP450-1/ftmC, ftmP450-2/ftmE and ftmP450-3/FtmG, are responsible for the conversion of tryprostatin B to 6-hydroxytryprostatin B, tryprostatin A to fumitremorgin C and fumitremorgin C to 12,13-dihydroxyfumitremorgin C, respectively. The putative methyltransferase ftmMT/ftmD is expected for the conversion of 6-hydroxytryprostatin B to tryprostatin A. FtmPT2/FtmH catalyzes the prenylation of 12,13-dihydroxyfumitre-morgin C in the presence of dimethylallyl diphosphate, resulting in the formation of fumitremorgin B. Fumitremorgin B is further converted to verruculogen by ftmOx1/ftmF via the insertion of an endoperoxide bond between the two prenyl moieties. Finally, verruculogen is further converted to fumitremorgin A by the verruculogen prenyltransferase ftmPT3. The chain is Verruculogen synthase from Neosartorya fischeri (strain ATCC 1020 / DSM 3700 / CBS 544.65 / FGSC A1164 / JCM 1740 / NRRL 181 / WB 181) (Aspergillus fischerianus).